Here is a 263-residue protein sequence, read N- to C-terminus: Indole-3-glycerol phosphate synthase (263 aa).

The protein belongs to the TrpC family.

The catalysed reaction is 1-(2-carboxyphenylamino)-1-deoxy-D-ribulose 5-phosphate + H(+) = (1S,2R)-1-C-(indol-3-yl)glycerol 3-phosphate + CO2 + H2O. The protein operates within amino-acid biosynthesis; L-tryptophan biosynthesis; L-tryptophan from chorismate: step 4/5. The sequence is that of Indole-3-glycerol phosphate synthase from Desulfosudis oleivorans (strain DSM 6200 / JCM 39069 / Hxd3) (Desulfococcus oleovorans).